The following is a 574-amino-acid chain: QANGTLGRSRWLPLDPVDCVWSRWSEWTPCNSCTKIRHRSRSVEVFGQFGGKPCQGQPIGEQQRCTSDAVCEQALPSECSSIEFTCESGACIKLRLSCNGDYDCEDGSDEDCEPVRKPCGTKLYDTNEQGRTAGYGINILGMEPRINPFNNDYFNGMCNKVKNINNNEYNRLPWNVGLLNYETIAEETVSKEIYEDTYTLLRELMTETKLTVSAGLNLKFTPTEKSMAKSNTTVSGGVGLDAEYDRTQMIKEVSEYTTIKNKSFMRVNGRVQLSTYRMRSRDLQVAGEFLEHVKSLPLEYEKGQYFSFLEDYGTHYTRNGKSGGEHQLVYVLNQDTIKDKKLTERKLQDCIKVGISANFDTNIGIGGDAHIRPGHCKDTVNKNTAEKEGKALVDKVITVVRGGTLEAAVAMRTQITKEGLMDVKTYQNWARTVGDAPALLSSEPEPIQTLIPLSMPDANTRRLNMQRATQEYEAEYSVCKCKPCHNGGSLALLDGKCLCLCLPQFEGLACQDAKADNNKNTKTPVRVFLEKGNWSCWAAWSGCSGGKRIRTRSCNTQGLSDATCRGDIVTEDYC.

A glycan (N-linked (GlcNAc...) asparagine) is linked at Asn3. Residues 18–72 (DCVWSRWSEWTPCNSCTKIRHRSRSVEVFGQFGGKPCQGQPIGEQQRCTSDAVCE) enclose the TSP type-1 1 domain. Intrachain disulfides connect Cys19-Cys54, Cys30-Cys65, Cys33-Cys71, Cys79-Cys91, Cys86-Cys104, Cys98-Cys112, and Cys119-Cys158. The 41-residue stretch at 77–117 (SECSSIEFTCESGACIKLRLSCNGDYDCEDGSDEDCEPVRK) folds into the LDL-receptor class A domain. The 366-residue stretch at 115–480 (VRKPCGTKLY…EYEAEYSVCK (366 aa)) folds into the MACPF domain. Residues 212-219 (VSAGLNLK) form a beta stranded membrane-spanning segment. A glycan (N-linked (GlcNAc...) asparagine) is linked at Asn231. A beta stranded transmembrane segment spans residues 235 to 242 (SGGVGLDA). A glycan (N-linked (GlcNAc...) asparagine) is linked at Asn261. A run of 2 beta stranded transmembrane segments spans residues 344–351 (ERKLQDCI) and 352–360 (KVGISANFD). 4 cysteine pairs are disulfide-bonded: Cys350/Cys376, Cys481/Cys497, Cys484/Cys499, and Cys501/Cys510. The region spanning 481-511 (CKPCHNGGSLALLDGKCLCLCLPQFEGLACQ) is the EGF-like domain. Positions 531–572 (KGNWSCWAAWSGCSGGKRIRTRSCNTQGLSDATCRGDIVTED) constitute a TSP type-1 2 domain. A glycan (N-linked (GlcNAc...) asparagine) is linked at Asn533.

Belongs to the complement C6/C7/C8/C9 family. As to quaternary structure, homooligomer; about 20 C9 chains oligomerize to give rise to a huge beta-barrel that forms a 100 Angstrom diameter pore in target membranes. Component of the membrane attack complex (MAC), composed of complement C5b, C6, C7, C8A, C8B, C8G and multiple copies of the pore-forming subunit C9.

Its subcellular location is the secreted. The protein resides in the target cell membrane. In terms of biological role, pore-forming component of the membrane attack complex (MAC), a multiprotein complex activated by the complement cascade, which inserts into a target cell membrane and forms a pore, leading to target cell membrane rupture and cell lysis. The MAC is initiated by proteolytic cleavage of C5 into complement C5b in response to the classical, alternative, lectin and GZMK complement pathways. The complement pathways consist in a cascade of proteins that leads to phagocytosis and breakdown of pathogens and signaling that strengthens the adaptive immune system. Constitutes the pore-forming subunit of the MAC complex: during MAC assembly, C9 associates with the C5b8 intermediate complex, and polymerizes to complete the pore. The sequence is that of Complement component C9 (c9) from Oncorhynchus mykiss (Rainbow trout).